A 401-amino-acid chain; its full sequence is Mu-type opioid receptor (401 aa).

Over 1–69 the chain is Extracellular; that stretch reads MDSSAVPANA…CPPTGSPSMI (69 aa). 5 N-linked (GlcNAc...) asparagine glycosylation sites follow: Asn-9, Asn-12, Asn-34, Asn-41, and Asn-49. Residues 70–94 traverse the membrane as a helical segment; it reads TAITIMALYSIVCVVGLFGNFLVMY. Over 95–107 the chain is Cytoplasmic; it reads VIVRYTKMKTATN. The helical transmembrane segment at 108–132 threads the bilayer; sequence IYIFNLALADALATSTLPFQSVNYL. Residues 133–143 are Extracellular-facing; it reads MGTWPFGTILC. Cysteines 143 and 220 form a disulfide. A helical transmembrane segment spans residues 144–166; the sequence is KIVISIDYYNMFTSIFTLCTMSV. Topologically, residues 167–186 are cytoplasmic; the sequence is DRYIAVCHPVKALDFRTPRN. The residue at position 169 (Tyr-169) is a Phosphotyrosine. Residues 187-208 form a helical membrane-spanning segment; that stretch reads AKIINVCNWILSSAIGLPVMFM. The Extracellular segment spans residues 209 to 231; the sequence is ATTKYRHGSIDCTLTFSHPTWYW. The chain crosses the membrane as a helical span at residues 232 to 256; that stretch reads ENLLKICVFIFAFIMPVLIITVCYG. Residues 257-280 lie on the Cytoplasmic side of the membrane; it reads LMILRLKSVRMLSGSKEKDRNLRR. A helical transmembrane segment spans residues 281 to 307; sequence ITRMVLVVVAVFIVCWTPIHIYVIIKA. The Extracellular segment spans residues 308 to 315; the sequence is LVTIPETT. Residues 316–339 traverse the membrane as a helical segment; sequence FQTVSWHFCIALGYTNSCLNPVLY. The NPxxY; plays a role in stabilizing the activated conformation of the receptor motif lies at 335 to 339; that stretch reads NPVLY. Residues 340-401 lie on the Cytoplasmic side of the membrane; the sequence is AFLDENFKRC…NLEAETAPLP (62 aa). Cys-354 carries the S-palmitoyl cysteine lipid modification. Positions 365–388 are disordered; that stretch reads NSTRIRQNTRDHPSTANTVDRTNH. Ser-366 carries the post-translational modification Phosphoserine. At Thr-373 the chain carries Phosphothreonine. At Ser-378 the chain carries Phosphoserine. Phosphothreonine is present on Thr-397.

It belongs to the G-protein coupled receptor 1 family. As to quaternary structure, forms homooligomers and heterooligomers with other GPCRs, such as OPRD1, OPRK1, OPRL1, NPFFR2, ADRA2A, SSTR2, CNR1 and CCR5 (probably in dimeric forms). Interacts with heterotrimeric G proteins; interaction with a heterotrimeric complex containing GNAI1, GNB1 and GNG2 stabilizes the active conformation of the receptor and increases its affinity for endomorphin-2, the synthetic opioid peptide DAMGO and for morphinan agonists. Interacts with PPL; the interaction disrupts agonist-mediated G-protein activation. Interacts (via C-terminus) with DNAJB4 (via C-terminus). Interacts with calmodulin; the interaction inhibits the constitutive activity of OPRM1; it abolishes basal and attenuates agonist-stimulated G-protein coupling. Interacts with FLNA, PLD2, RANBP9 and WLS and GPM6A. Interacts with RTP4. Interacts with SYP and GNAS. Interacts with RGS9, RGS17, RGS20, RGS4, PPP1R9B and HINT1. In terms of processing, phosphorylated. Differentially phosphorylated in basal and agonist-induced conditions. Agonist-mediated phosphorylation modulates receptor internalization. Phosphorylated by GRK2 in a agonist-dependent manner. Phosphorylation at Tyr-169 requires receptor activation, is dependent on non-receptor protein tyrosine kinase Src and results in a decrease in agonist efficacy by reducing G-protein coupling efficiency. Phosphorylated on tyrosine residues; the phosphorylation is involved in agonist-induced G-protein-independent receptor down-regulation. Phosphorylation at Ser-378 is involved in G-protein-dependent but not beta-arrestin-dependent activation of the ERK pathway. Ubiquitinated. A basal ubiquitination seems not to be related to degradation. Ubiquitination is increased upon formation of OPRM1:OPRD1 oligomers leading to proteasomal degradation; the ubiquitination is diminished by RTP4.

Its subcellular location is the cell membrane. The protein localises to the cell projection. The protein resides in the axon. It is found in the perikaryon. It localises to the dendrite. Its subcellular location is the endosome. In terms of biological role, receptor for endogenous opioids such as beta-endorphin and endomorphin. Receptor for natural and synthetic opioids including morphine, heroin, DAMGO, fentanyl, etorphine, buprenorphin and methadone. Also activated by enkephalin peptides, such as Met-enkephalin or Met-enkephalin-Arg-Phe, with higher affinity for Met-enkephalin-Arg-Phe. Agonist binding to the receptor induces coupling to an inactive GDP-bound heterotrimeric G-protein complex and subsequent exchange of GDP for GTP in the G-protein alpha subunit leading to dissociation of the G-protein complex with the free GTP-bound G-protein alpha and the G-protein beta-gamma dimer activating downstream cellular effectors. The agonist- and cell type-specific activity is predominantly coupled to pertussis toxin-sensitive G(i) and G(o) G alpha proteins, GNAI1, GNAI2, GNAI3 and GNAO1, and to a lesser extent to pertussis toxin-insensitive G alpha proteins GNAZ and GNA15. They mediate an array of downstream cellular responses, including inhibition of adenylate cyclase activity and both N-type and L-type calcium channels, activation of inward rectifying potassium channels, mitogen-activated protein kinase (MAPK), phospholipase C (PLC), phosphoinositide/protein kinase (PKC), phosphoinositide 3-kinase (PI3K) and regulation of NF-kappa-B. Also couples to adenylate cyclase stimulatory G alpha proteins. The selective temporal coupling to G-proteins and subsequent signaling can be regulated by RGSZ proteins, such as RGS9, RGS17 and RGS4. Phosphorylation by members of the GPRK subfamily of Ser/Thr protein kinases and association with beta-arrestins is involved in short-term receptor desensitization. Beta-arrestins associate with the GPRK-phosphorylated receptor and uncouple it from the G-protein thus terminating signal transduction. The phosphorylated receptor is internalized through endocytosis via clathrin-coated pits which involves beta-arrestins. The activation of the ERK pathway occurs either in a G-protein-dependent or a beta-arrestin-dependent manner and is regulated by agonist-specific receptor phosphorylation. Acts as a class A G-protein coupled receptor (GPCR) which dissociates from beta-arrestin at or near the plasma membrane and undergoes rapid recycling. Receptor down-regulation pathways are varying with the agonist and occur dependent or independent of G-protein coupling. Endogenous ligands induce rapid desensitization, endocytosis and recycling. Heterooligomerization with other GPCRs can modulate agonist binding, signaling and trafficking properties. Involved in neurogenesis. The polypeptide is Mu-type opioid receptor (OPRM1) (Pan troglodytes (Chimpanzee)).